A 497-amino-acid polypeptide reads, in one-letter code: Glycerol kinase (497 aa).

Thr13 serves as a coordination point for ADP. Positions 13, 14, and 15 each coordinate ATP. Residue Thr13 participates in sn-glycerol 3-phosphate binding. Arg17 lines the ADP pocket. 3 residues coordinate sn-glycerol 3-phosphate: Arg83, Glu84, and Tyr135. Residues Arg83, Glu84, and Tyr135 each coordinate glycerol. Residue His231 is modified to Phosphohistidine; by HPr. Asp245 is a sn-glycerol 3-phosphate binding site. Residues Asp245 and Gln246 each contribute to the glycerol site. Residues Thr267 and Gly310 each contribute to the ADP site. Residues Thr267, Gly310, Gln314, and Gly411 each contribute to the ATP site. ADP contacts are provided by Gly411 and Asn415.

Belongs to the FGGY kinase family. As to quaternary structure, homotetramer and homodimer (in equilibrium). The phosphoenolpyruvate-dependent sugar phosphotransferase system (PTS), including enzyme I, and histidine-containing protein (HPr) are required for the phosphorylation, which leads to the activation of the enzyme.

The catalysed reaction is glycerol + ATP = sn-glycerol 3-phosphate + ADP + H(+). It participates in polyol metabolism; glycerol degradation via glycerol kinase pathway; sn-glycerol 3-phosphate from glycerol: step 1/1. With respect to regulation, activated by phosphorylation and inhibited by fructose 1,6-bisphosphate (FBP). Its function is as follows. Key enzyme in the regulation of glycerol uptake and metabolism. Catalyzes the phosphorylation of glycerol to yield sn-glycerol 3-phosphate. This is Glycerol kinase from Listeria monocytogenes serotype 4a (strain HCC23).